A 189-amino-acid chain; its full sequence is Interferon alpha-16 (189 aa).

Residues 1 to 23 (MALSFSLLMAVLVLSYKSICSLG) form the signal peptide. 2 disulfides stabilise this stretch: cysteine 24/cysteine 122 and cysteine 52/cysteine 162.

Belongs to the alpha/beta interferon family.

Its subcellular location is the secreted. In terms of biological role, produced by macrophages, IFN-alpha have antiviral activities. Interferon stimulates the production of two enzymes: a protein kinase and an oligoadenylate synthetase. The protein is Interferon alpha-16 (IFNA16) of Homo sapiens (Human).